The following is a 553-amino-acid chain: CTP synthase (553 aa).

Residues 1–277 (MPTEPETDYD…DQYVMEELDI (277 aa)) are amidoligase domain. Position 26 (S26) interacts with CTP. A UTP-binding site is contributed by S26. ATP is bound by residues 27-32 (GLGKGI) and D84. Mg(2+) contacts are provided by D84 and E152. CTP-binding positions include 159–161 (DIE), 198–203 (KTKPTQ), and K234. Residues 198-203 (KTKPTQ) and K234 contribute to the UTP site. V252 is a binding site for ATP. The region spanning 307–544 (LVGKYDLEDA…LEAVLGDDPH (238 aa)) is the Glutamine amidotransferase type-1 domain. L-glutamine is bound at residue G364. C391 functions as the Nucleophile; for glutamine hydrolysis in the catalytic mechanism. L-glutamine-binding positions include 392–395 (LGFQ), E415, and R472. Catalysis depends on residues H517 and E519.

Belongs to the CTP synthase family. Homotetramer.

It localises to the cytoplasm. The enzyme catalyses UTP + L-glutamine + ATP + H2O = CTP + L-glutamate + ADP + phosphate + 2 H(+). The catalysed reaction is L-glutamine + H2O = L-glutamate + NH4(+). It catalyses the reaction UTP + NH4(+) + ATP = CTP + ADP + phosphate + 2 H(+). The protein operates within pyrimidine metabolism; CTP biosynthesis via de novo pathway; CTP from UDP: step 2/2. With respect to regulation, allosterically activated by GTP, when glutamine is the substrate; GTP has no effect on the reaction when ammonia is the substrate. The allosteric effector GTP functions by stabilizing the protein conformation that binds the tetrahedral intermediate(s) formed during glutamine hydrolysis. Inhibited by the product CTP, via allosteric rather than competitive inhibition. Inhibited by 6-diazo-5-oxo-l-norleucine (DON). Catalyzes the ATP-dependent amination of UTP to CTP with either L-glutamine or ammonia as the source of nitrogen. Regulates intracellular CTP levels through interactions with the four ribonucleotide triphosphates. The sequence is that of CTP synthase from Haloarcula hispanica (strain ATCC 33960 / DSM 4426 / JCM 8911 / NBRC 102182 / NCIMB 2187 / VKM B-1755).